Here is a 612-residue protein sequence, read N- to C-terminus: MICLFGNCNCQTGIFGLYDYVSFLYHSPSSCRVRLVLSLPASPNHMEEQSPKFESSFPRRTSEGPVDDVGKSPPASFYRELLANKAQQPQLSEDEEDHNPKDFLFKEDSEDELLIPDSENHNSSSTSPRKFKVENIRWGSDTLNGSILPLNSQGSNLQSLLSNVGELEHLLSKDVAKHSKYLKEQSSKVEKARANIVTNLTRLSLVLSSIFNTYQAKAQDKQAILDKIEEWEDEKKSLLDDMKEVLSTDDNADGETHKFLELASESINVENEIEALETRLKQLKIKQRTLKNECFQSQGIIESRLSNFVQAVEKIEMRERKSIEQVVQQLSENQLGYWNDNLALEVMNGLTINPGDISLVEEYEPVDILKQVESLEKPTIAADYHLPKNTNKQASRFTRQLLEFNYKCQPKLNVYPVVGLITKELKEDSAKEQEYKHRYDQVTHTLSALKDSFALIYHTEQQLQSITQSTQDLKDFQSLMNQMVESLLKTHSEADQYNLYLAKDVLAQEISIIHQALNKLNQSTEYSSVESDNVKNHDGLLFQTFSKAQERTKLPSIKSATSIRYAPSLYNSLSPTSTSKTTAKGEVNYDAGINKYTKVKEVLRSGKGNKDE.

The disordered stretch occupies residues 44-72 (NHMEEQSPKFESSFPRRTSEGPVDDVGKS). The stretch at 214 to 296 (YQAKAQDKQA…QRTLKNECFQ (83 aa)) forms a coiled coil.

This sequence belongs to the ATG28 family. As to quaternary structure, interacts with ATG35.

It is found in the cytoplasm. It localises to the vacuole membrane. The protein localises to the cytoplasmic vesicle membrane. In terms of biological role, required for the autophagic degradation of peroxisomes called pexophagy, but not essential for general autophagy. Involved in resistance to elevated pH. The chain is Autophagy-related protein 28 (ATG28) from Komagataella phaffii (strain GS115 / ATCC 20864) (Yeast).